The sequence spans 268 residues: Acidic leucine-rich nuclear phosphoprotein 32 family member E (268 aa).

Methionine 1 carries the N-acetylmethionine modification. LRR repeat units lie at residues 18 to 38 (EVTE…EGLN), 43 to 64 (ELEF…PSLN), 65 to 87 (KLRK…AEKC), and 89 to 110 (NLTY…EALQ). Lysine 68 participates in a covalent cross-link: Glycyl lysine isopeptide (Lys-Gly) (interchain with G-Cter in SUMO2). The LRRCT domain occupies 123–161 (CEITNLEDYRESIFELLQQITYLDGFDQEDNEAPDSEEE). Composition is skewed to acidic residues over residues 149–216 (DQED…EEEV) and 226–247 (IQDE…EEEE). The interval 149–268 (DQEDNEAPDS…AEDDGEEEDD (120 aa)) is disordered. The tract at residues 215–268 (EVGLSYLMKEEIQDEEDDDDYVEEGEEEEEEEEGGLRGEKRKRDAEDDGEEEDD) is ZID domain. The span at 248–259 (GGLRGEKRKRDA) shows a compositional bias: basic and acidic residues.

Belongs to the ANP32 family. Interacts with the importin alpha KPNA1 and KPNA2. Component of a SWR1-like complex, composed of EP400, KAT5/TIP60, TRRAP, BRD8, RUVBL1, RUVBL2, ING3 and ANP32E; the complex does not contain SRCAP. Interacts with H2A.Z/H2AZ1. In terms of processing, phosphorylated. The phosphorylation is nuclear localization signal (NLS)-dependent. Expressed in peripheral blood leukocytes, colon, small intestine, prostate, thymus, spleen, skeletal muscle, liver and kidney.

Its subcellular location is the cytoplasm. The protein resides in the nucleus. Functionally, histone chaperone that specifically mediates the genome-wide removal of histone H2A.Z/H2AZ1 from the nucleosome: removes H2A.Z/H2AZ1 from its normal sites of deposition, especially from enhancer and insulator regions. Not involved in deposition of H2A.Z/H2AZ1 in the nucleosome. May stabilize the evicted H2A.Z/H2AZ1-H2B dimer, thus shifting the equilibrium towards dissociation and the off-chromatin state. Inhibits activity of protein phosphatase 2A (PP2A). Does not inhibit protein phosphatase 1. May play a role in cerebellar development and synaptogenesis. This is Acidic leucine-rich nuclear phosphoprotein 32 family member E (ANP32E) from Homo sapiens (Human).